We begin with the raw amino-acid sequence, 523 residues long: Tyrosine ammonia-lyase (523 aa).

Tyrosine 60 functions as the Proton donor/acceptor in the catalytic mechanism. Histidine 89 serves as a coordination point for substrate. Residues 149–151 constitute a cross-link (5-imidazolinone (Ala-Gly)); the sequence is ASG. The residue at position 150 (serine 150) is a 2,3-didehydroalanine (Ser). Substrate contacts are provided by residues arginine 303 and 432-436; that span reads NAANQ.

Belongs to the PAL/histidase family. As to quaternary structure, homotetramer. Post-translationally, contains an active site 4-methylidene-imidazol-5-one (MIO), which is formed autocatalytically by cyclization and dehydration of residues Ala-Ser-Gly.

It catalyses the reaction L-tyrosine = (E)-4-coumarate + NH4(+). Functionally, catalyzes the non-oxidative deamination of L-tyrosine. Has very low phenylalanine ammonia-lyase activity (in vitro). This is Tyrosine ammonia-lyase (hutH) from Cereibacter sphaeroides (strain ATCC 17023 / DSM 158 / JCM 6121 / CCUG 31486 / LMG 2827 / NBRC 12203 / NCIMB 8253 / ATH 2.4.1.) (Rhodobacter sphaeroides).